The following is a 580-amino-acid chain: WD repeat-containing protein 46 (580 aa).

The tract at residues 34–108 is disordered; it reads SWKEYKKMKQ…QQEKMKVTKD (75 aa). Composition is skewed to basic and acidic residues over residues 64 to 85 and 98 to 108; these read TEGRAKKPKVLTKEQLERHDTG and LQQEKMKVTKD. WD repeat units lie at residues 193–234, 235–272, 274–312, 315–354, 357–396, and 399–436; these read AALD…YTYV, YDNLGTELHCLKTMYDTARLEFLPHHFLLVGSSRNSFL, YVDVSVGKQVASFATKSGTLDVMCQNPANAIIHTGHTNG, SLWSPNSKEPLVKILTHLSAVKGIAVDDQGNYMATTGLDR, RIWDVRMFRQLHAYSLPFGVSNVAISQKMNVACAVGNHVQ, and RGMHNGTCKEPYLVHNCGGVVTDLRFVPWEDVLGIGHA.

Part of the small subunit (SSU) processome.

It localises to the nucleus. The protein resides in the nucleolus. Its function is as follows. Scaffold component of the nucleolar structure. Part of the small subunit (SSU) processome, first precursor of the small eukaryotic ribosomal subunit. Required for 18S rRNA processing. Plays a role in negative regulation of detoxification genes by inhibiting protein levels of transcription factor skn-1, leading to down-regulation of skn-1 target genes. The protein is WD repeat-containing protein 46 of Caenorhabditis elegans.